Reading from the N-terminus, the 110-residue chain is Small ribosomal subunit protein uS17 (110 aa).

It belongs to the universal ribosomal protein uS17 family. Part of the 30S ribosomal subunit.

In terms of biological role, one of the primary rRNA binding proteins, it binds specifically to the 5'-end of 16S ribosomal RNA. The chain is Small ribosomal subunit protein uS17 from Haloquadratum walsbyi (strain DSM 16790 / HBSQ001).